The sequence spans 457 residues: 4-hydroxybenzoate transporter PcaK (457 aa).

At 1 to 34 (MPKEANMASQDYATQRSSLDAQALINDAPLSRYQ) the chain is on the cytoplasmic side. Residues 35 to 55 (WLIAIVCFLIVFVDGIDTAAM) traverse the membrane as a helical segment. Topologically, residues 56 to 72 (GFIAPALAQDWGVDRSQ) are periplasmic. The helical transmembrane segment at 73-93 (LGPVMSAALGGMIIGALVSGP) threads the bilayer. Topologically, residues 94–101 (TADRFGRK) are cytoplasmic. The chain crosses the membrane as a helical span at residues 102–122 (IVLSMSMLVFGGFTLACAYST). Over 123 to 128 (NLDSLV) the chain is Periplasmic. A helical transmembrane segment spans residues 129–149 (IFRFLTGIGLGAAMPNATTLF). Topologically, residues 150 to 168 (SEYCPARIRSLLVTCMFCG) are cytoplasmic. The helical transmembrane segment at 169-189 (YNLGMAIGGFISSWLIPAFGW) threads the bilayer. Over 190–191 (HS) the chain is Periplasmic. A helical membrane pass occupies residues 192-212 (LFLLGGWAPLILMLLVIFFLP). At 213–274 (ESYRFLIVKG…LFSAKYVKGT (62 aa)) the chain is on the cytoplasmic side. A helical membrane pass occupies residues 275–295 (VLLWVTYFMGLVMIYLLTSWL). Residues 296–310 (PTLMRETGASLERAA) are Periplasmic-facing. Residues 311–331 (FLGGLFQFGGVLSALFIGWAM) traverse the membrane as a helical segment. Over 332–338 (DRFNPNR) the chain is Cytoplasmic. The chain crosses the membrane as a helical span at residues 339-359 (IIAGFYLAAGIFAVIVGQSLS). Topologically, residues 360–363 (NPTL) are periplasmic. Residues 364–384 (LALFILCAGIAVNGAQSSMPV) form a helical membrane-spanning segment. Residues 385–400 (LSARFYPTQCRATGVA) are Cytoplasmic-facing. Residues 401–421 (WMSGIGRFGAVFGAWIGAVLL) traverse the membrane as a helical segment. Over 422–426 (GNNWS) the chain is Periplasmic. The helical transmembrane segment at 427–447 (FTMILSMLIIPAAAAAIAIFV) threads the bilayer. Over 448-457 (KSLVAHTDAT) the chain is Cytoplasmic.

The protein belongs to the major facilitator superfamily. Aromatic acid:H(+) symporter (AAHS) (TC 2.A.1.15) family. As to quaternary structure, homotrimer.

Its subcellular location is the cell inner membrane. In terms of biological role, uptake of 4-hydroxybenzoate (4-HB). Can also transport a variety of aromatic acids with hydroxyl substitutions at the 2-, 3- and 4-positions, such as salicylate, 2,4-dihydroxybenzoate, protocatechuate, 3-hydroxybenzoate, vanillate and gentisate. The sequence is that of 4-hydroxybenzoate transporter PcaK from Acinetobacter baylyi (strain ATCC 33305 / BD413 / ADP1).